A 193-amino-acid chain; its full sequence is C-type lectin domain family 3 member A homolog (193 aa).

An N-terminal signal peptide occupies residues 1–24; the sequence is MAQAGLLIWLFFTILLLDLTCTQS. Cystine bridges form between Cys-66–Cys-76, Cys-93–Cys-188, and Cys-164–Cys-180. In terms of domain architecture, C-type lectin spans 72-189; that stretch reads IHKKCYLSFE…CRSLKKYICE (118 aa).

The protein resides in the secreted. This is C-type lectin domain family 3 member A homolog (clec3a) from Xenopus laevis (African clawed frog).